The following is a 624-amino-acid chain: Bifunctional protein ArgH (624 aa).

The argininosuccinate lyase stretch occupies residues 1-466 (MALWGGRFTQ…AARDTTLVKV (466 aa)). The N-acetyltransferase domain maps to 464–614 (VKVRPARITD…DEVALEFNLS (151 aa)). The tract at residues 467-624 (RPARITDIET…EQIISQVKVA (158 aa)) is probable acetyltransferase.

It in the N-terminal section; belongs to the lyase 1 family. Argininosuccinate lyase subfamily.

It is found in the cytoplasm. The catalysed reaction is 2-(N(omega)-L-arginino)succinate = fumarate + L-arginine. It functions in the pathway amino-acid biosynthesis; L-arginine biosynthesis; L-arginine from L-ornithine and carbamoyl phosphate: step 3/3. This Vibrio vulnificus (strain CMCP6) protein is Bifunctional protein ArgH (argH).